The chain runs to 61 residues: Photosystem II reaction center protein K (61 aa).

A propeptide spanning residues 1 to 24 (MLNIFSLISICLNSALYSSSFFFG) is cleaved from the precursor. Residues 40–60 (MPVIPVFFFLLAFVWQAAVSF) form a helical membrane-spanning segment.

The protein belongs to the PsbK family. PSII is composed of 1 copy each of membrane proteins PsbA, PsbB, PsbC, PsbD, PsbE, PsbF, PsbH, PsbI, PsbJ, PsbK, PsbL, PsbM, PsbT, PsbX, PsbY, PsbZ, Psb30/Ycf12, at least 3 peripheral proteins of the oxygen-evolving complex and a large number of cofactors. It forms dimeric complexes.

It is found in the plastid. Its subcellular location is the chloroplast thylakoid membrane. One of the components of the core complex of photosystem II (PSII). PSII is a light-driven water:plastoquinone oxidoreductase that uses light energy to abstract electrons from H(2)O, generating O(2) and a proton gradient subsequently used for ATP formation. It consists of a core antenna complex that captures photons, and an electron transfer chain that converts photonic excitation into a charge separation. The chain is Photosystem II reaction center protein K from Jasminum nudiflorum (Winter jasmine).